Here is a 250-residue protein sequence, read N- to C-terminus: PHD finger protein ALFIN-LIKE 3 (250 aa).

Methionine 1 is subject to N-acetylmethionine. Residues 146-192 form a disordered region; it reads DKSSAANQNGNKSKSNSKVRTSEGKSSKTKQPKEEDEEIDEDDEDDH. Residues 149-163 are compositionally biased toward low complexity; it reads SAANQNGNKSKSNSK. The segment covering 179–192 has biased composition (acidic residues); sequence EEDEEIDEDDEDDH. Residues 194 to 246 form a PHD-type zinc finger; that stretch reads ETLCGACGDSDGADEFWICCDLCEKWFHGKCVKITPARAEHIKQYKCPSCSNK.

Belongs to the Alfin family. Ubiquitously expressed.

It is found in the nucleus. Functionally, histone-binding component that specifically recognizes H3 tails trimethylated on 'Lys-4' (H3K4me3), which mark transcription start sites of virtually all active genes. The protein is PHD finger protein ALFIN-LIKE 3 (AL3) of Arabidopsis thaliana (Mouse-ear cress).